A 291-amino-acid polypeptide reads, in one-letter code: Protease HtpX homolog (291 aa).

Transmembrane regions (helical) follow at residues 4 to 24 (IALFLITNLAVMAVLGITASL) and 38 to 58 (LGALLGFAMVMGFGGAFISLL). His-144 is a Zn(2+) binding site. Residue Glu-145 is part of the active site. Residue His-148 participates in Zn(2+) binding. A run of 2 helical transmembrane segments spans residues 159 to 179 (LIQGVMNTFVVFLSRAIGYFI) and 197 to 217 (VTTVVLDLLLGLVAAMIVAWF). Glu-222 is a binding site for Zn(2+).

This sequence belongs to the peptidase M48B family. It depends on Zn(2+) as a cofactor.

It is found in the cell inner membrane. The sequence is that of Protease HtpX homolog from Leptothrix cholodnii (strain ATCC 51168 / LMG 8142 / SP-6) (Leptothrix discophora (strain SP-6)).